The following is a 403-amino-acid chain: CCA-adding enzyme (403 aa).

Residues Gly-32 and Arg-35 each contribute to the ATP site. CTP contacts are provided by Gly-32 and Arg-35. Mg(2+)-binding residues include Asp-45 and Asp-47. ATP is bound by residues Arg-116, Asp-159, Arg-162, Arg-165, and Arg-168. Positions 116, 159, 162, 165, and 168 each coordinate CTP.

It belongs to the tRNA nucleotidyltransferase/poly(A) polymerase family. Bacterial CCA-adding enzyme type 3 subfamily. In terms of assembly, homodimer. Requires Mg(2+) as cofactor.

It catalyses the reaction a tRNA precursor + 2 CTP + ATP = a tRNA with a 3' CCA end + 3 diphosphate. It carries out the reaction a tRNA with a 3' CCA end + 2 CTP + ATP = a tRNA with a 3' CCACCA end + 3 diphosphate. Catalyzes the addition and repair of the essential 3'-terminal CCA sequence in tRNAs without using a nucleic acid template. Adds these three nucleotides in the order of C, C, and A to the tRNA nucleotide-73, using CTP and ATP as substrates and producing inorganic pyrophosphate. tRNA 3'-terminal CCA addition is required both for tRNA processing and repair. Also involved in tRNA surveillance by mediating tandem CCA addition to generate a CCACCA at the 3' terminus of unstable tRNAs. While stable tRNAs receive only 3'-terminal CCA, unstable tRNAs are marked with CCACCA and rapidly degraded. In Leuconostoc citreum (strain KM20), this protein is CCA-adding enzyme.